The primary structure comprises 2803 residues: Microtubule-associated protein 1A (2803 aa).

Residues S114, S117, S118, S121, and S155 each carry the phosphoserine modification. Phosphotyrosine is present on Y177. Disordered stretches follow at residues 302–466 and 486–516; these read GAVP…DLKP and IDRS…PLPT. Phosphoserine is present on residues S319, S322, and S384. A compositionally biased stretch (basic and acidic residues) spans 335–390; it reads AKREEVVEEGAKEARSELAKELAKTEKKAKESSEKPPEKPAKPERVKTESSEALKA. A compositionally biased stretch (basic residues) spans 391 to 406; the sequence is EKRKLIKDKVGKKHLK. Composition is skewed to basic and acidic residues over residues 407–464 and 486–499; these read EKIS…KPDL and IDRS…KELS. Tandem repeats lie at residues 415–417, 420–422, 427–429, 431–433, 436–438, 440–442, 444–446, and 449–451. The interval 415–541 is 9 X 3 AA repeats of K-K-[DE]; sequence KKDKEKKEIK…TQDFEEMKRE (127 aa). T504 carries the phosphothreonine modification. Phosphoserine occurs at positions 526 and 527. Copy 9 of the repeat occupies 539 to 541; that stretch reads KRE. Composition is skewed to basic and acidic residues over residues 539–554 and 585–596; these read KREE…DTGL and QEEHVMKEKELV. Disordered regions lie at residues 539–712, 734–806, 847–1080, 1109–1548, and 1573–1605; these read KREE…KAPE, YIQD…GTPE, EDQS…VNID, TGPI…EKKD, and EENH…EKVK. 2 positions are modified to phosphoserine: S605 and S612. T616 carries the phosphothreonine modification. Over residues 623–667 the composition is skewed to basic and acidic residues; the sequence is WEEKKQREAERLPDRTEAREESEPEVKEDVIEKAELEEMEEVHPS. 3 positions are modified to phosphoserine: S644, S667, and S787. Composition is skewed to polar residues over residues 847–860 and 871–883; these read EDQS…PQTE and TVTS…TEAT. Residues S874, S877, S878, and S891 each carry the phosphoserine modification. T894 carries the post-translational modification Phosphothreonine. 9 positions are modified to phosphoserine: S896, S900, S909, S986, S996, S1004, S1013, S1019, and S1029. The segment covering 1031–1065 has biased composition (basic and acidic residues); it reads GDTKRTPGVGKEDAAEETVKPGPEEGTLEKEEKVP. S1069, S1144, S1146, S1160, S1172, S1190, S1200, S1203, S1209, S1218, S1221, and S1264 each carry phosphoserine. Basic and acidic residues predominate over residues 1131-1146; the sequence is KPQKDEVLRYPDRSLS. Residues 1154–1169 show a composition bias toward polar residues; that stretch reads SVLSVPSPDTANQEPT. Composition is skewed to polar residues over residues 1211–1224 and 1264–1278; these read DVSS…SLGT and SPPT…AQTD. Low complexity predominate over residues 1289–1299; that stretch reads PASSFSHSTPS. Phosphoserine is present on residues S1326, S1329, S1544, S1600, and S1626. Basic and acidic residues-rich tracts occupy residues 1338-1548 and 1586-1605; these read IAIK…EKKD and QEDK…EKVK. Residues 1632–1642 are compositionally biased toward basic and acidic residues; that stretch reads RAREQEEKYWR. Disordered regions lie at residues 1632 to 1684, 1713 to 1879, and 1892 to 2673; these read RARE…RYWR, DGQG…FSWG, and EGAA…LVNG. S1654 is subject to Phosphoserine. Basic and acidic residues predominate over residues 1655-1666; the sequence is PTREEPAGEQKE. Phosphoserine is present on residues S1675, S1749, S1762, S1776, S1791, S1797, S1801, S1812, and S1818. The span at 1852 to 1867 shows a compositional bias: pro residues; that stretch reads LPPAPLSPAPGPPTPA. The segment covering 1907–1929 has biased composition (basic and acidic residues); the sequence is KDYRKAEGEREEEGRAEAPDKSS. S1931 is modified (phosphoserine). A compositionally biased stretch (basic and acidic residues) spans 1951 to 1964; the sequence is PEQREPTPYPDERS. A Phosphothreonine modification is found at T1957. The span at 2019 to 2033 shows a compositional bias: polar residues; it reads SPISPKSLQSDTPTF. S2022 carries the post-translational modification Phosphoserine. Over residues 2042-2066 the composition is skewed to pro residues; the sequence is TVPPRPEPGPSMEPSLTPPAVPPRA. Residue T2058 is modified to Phosphothreonine. 4 positions are modified to phosphoserine: S2074, S2104, S2106, and S2108. The segment covering 2086–2122 has biased composition (basic and acidic residues); the sequence is PDRRSPSPKESGRSHWDDSTSDSELEKGAREQPEKEA. A compositionally biased stretch (pro residues) spans 2175 to 2184; the sequence is PAPPQLPSPA. S2235, S2252, S2256, S2259, and S2260 each carry phosphoserine. Residues 2257-2268 are compositionally biased toward polar residues; that stretch reads EGSSSEATTPVI. The span at 2312–2325 shows a compositional bias: low complexity; the sequence is ASLDLALAPAPSLP. A Phosphoserine modification is found at S2449. Residues 2461–2473 are compositionally biased toward basic and acidic residues; sequence IDDRDLSTEEVRL. Residues 2502-2514 show a composition bias toward low complexity; it reads SASDSGSSQSDSD. A compositionally biased stretch (pro residues) spans 2559–2575; that stretch reads DPPPLPQPDPRPSPPRP. Positions 2590-2602 are enriched in basic and acidic residues; it reads GRVERLREKEKVQ. S2649 and S2664 each carry phosphoserine.

The protein belongs to the MAP1 family. 3 different light chains, LC1 (a cleavage product of MAP1B), LC2 (a cleavage product of MAP1A) and LC3 (produced by one of the MAP1LC3 genes), can associate with the MAP1A or MAP1B heavy chains. Interacts with TIAM2. Interacts with guanylate kinase-like domain of DLG1, DLG2 and DLG4. Binds to CSNK1D. As to quaternary structure, interacts with ELAVL4. In terms of processing, phosphorylated by CSNK1D. Post-translationally, LC2 is generated from MAP1A by proteolytic processing. Brain.

It is found in the cytoplasm. The protein localises to the cytoskeleton. Its function is as follows. Structural protein involved in the filamentous cross-bridging between microtubules and other skeletal elements. The chain is Microtubule-associated protein 1A (MAP1A) from Homo sapiens (Human).